The chain runs to 146 residues: Cysteine protease inhibitor 3 (146 aa).

Disulfide bonds link Cys8–Cys60 and Cys109–Cys115.

The protein belongs to the protease inhibitor I3 (leguminous Kunitz-type inhibitor) family.

The protein localises to the vacuole. Functionally, inhibitor of cysteine proteases. May protect the plant by inhibiting proteases of invading organisms. The protein is Cysteine protease inhibitor 3 of Solanum tuberosum (Potato).